Consider the following 272-residue polypeptide: Sulfate transporter CysZ (272 aa).

4 consecutive transmembrane segments (helical) span residues 29 to 49 (FVIM…WLFI), 66 to 86 (WLSF…LLLF), 148 to 168 (IIAL…VPVL), and 219 to 239 (FVPV…TLMW).

Belongs to the CysZ family.

The protein resides in the cell inner membrane. In terms of biological role, high affinity, high specificity proton-dependent sulfate transporter, which mediates sulfate uptake. Provides the sulfur source for the cysteine synthesis pathway. The polypeptide is Sulfate transporter CysZ (Haemophilus influenzae (strain ATCC 51907 / DSM 11121 / KW20 / Rd)).